The following is a 269-amino-acid chain: Ribosomal RNA large subunit methyltransferase E (269 aa).

Gly-48, Trp-50, Asp-68, Asp-86, and Asp-111 together coordinate S-adenosyl-L-methionine. The Proton acceptor role is filled by Lys-151. Positions 198-256 constitute a TRAM domain; sequence PVAAGDRIEVTVEERGDEGDGIAYVEGYSIFVSDADVGETVTVEVVDAKPRFGFATRVD.

This sequence belongs to the class I-like SAM-binding methyltransferase superfamily. RNA methyltransferase RlmE family.

The protein localises to the cytoplasm. It catalyses the reaction uridine(2552) in 23S rRNA + S-adenosyl-L-methionine = 2'-O-methyluridine(2552) in 23S rRNA + S-adenosyl-L-homocysteine + H(+). Functionally, specifically methylates the uridine in position 2552 of 23S rRNA at the 2'-O position of the ribose in the fully assembled 50S ribosomal subunit. This is Ribosomal RNA large subunit methyltransferase E from Halorubrum lacusprofundi (strain ATCC 49239 / DSM 5036 / JCM 8891 / ACAM 34).